Reading from the N-terminus, the 282-residue chain is UDP-3-O-acyl-N-acetylglucosamine deacetylase (282 aa).

Residues His-81, His-239, and Asp-243 each coordinate Zn(2+). Catalysis depends on His-266, which acts as the Proton donor.

This sequence belongs to the LpxC family. It depends on Zn(2+) as a cofactor.

The catalysed reaction is a UDP-3-O-[(3R)-3-hydroxyacyl]-N-acetyl-alpha-D-glucosamine + H2O = a UDP-3-O-[(3R)-3-hydroxyacyl]-alpha-D-glucosamine + acetate. It participates in glycolipid biosynthesis; lipid IV(A) biosynthesis; lipid IV(A) from (3R)-3-hydroxytetradecanoyl-[acyl-carrier-protein] and UDP-N-acetyl-alpha-D-glucosamine: step 2/6. In terms of biological role, catalyzes the hydrolysis of UDP-3-O-myristoyl-N-acetylglucosamine to form UDP-3-O-myristoylglucosamine and acetate, the committed step in lipid A biosynthesis. This Chlamydia pneumoniae (Chlamydophila pneumoniae) protein is UDP-3-O-acyl-N-acetylglucosamine deacetylase.